The primary structure comprises 252 residues: tRNA-cytidine(32) 2-sulfurtransferase (252 aa).

Positions 37-42 (SGGKDS) match the PP-loop motif motif. Residues C112, C115, and C202 each contribute to the [4Fe-4S] cluster site.

The protein belongs to the TtcA family. As to quaternary structure, homodimer. Requires Mg(2+) as cofactor. The cofactor is [4Fe-4S] cluster.

It localises to the cytoplasm. It catalyses the reaction cytidine(32) in tRNA + S-sulfanyl-L-cysteinyl-[cysteine desulfurase] + AH2 + ATP = 2-thiocytidine(32) in tRNA + L-cysteinyl-[cysteine desulfurase] + A + AMP + diphosphate + H(+). The protein operates within tRNA modification. Catalyzes the ATP-dependent 2-thiolation of cytidine in position 32 of tRNA, to form 2-thiocytidine (s(2)C32). The sulfur atoms are provided by the cysteine/cysteine desulfurase (IscS) system. The sequence is that of tRNA-cytidine(32) 2-sulfurtransferase from Geotalea daltonii (strain DSM 22248 / JCM 15807 / FRC-32) (Geobacter daltonii).